We begin with the raw amino-acid sequence, 513 residues long: GTPase Obg (513 aa).

In terms of domain architecture, Obg spans 3 to 160 (THFVDRVVVH…LDLHLEVKTL (158 aa)). One can recognise an OBG-type G domain in the interval 161–337 (ADVALVGFPS…LSFAMAELVS (177 aa)). GTP is bound by residues 167 to 174 (GFPSAGKS), 192 to 196 (FTTLV), 213 to 216 (DVPG), 289 to 292 (NKAD), and 318 to 320 (SAV). The Mg(2+) site is built by S174 and T194. Residues 355–444 (PRAVDDQGFK…ANAVVFDWEP (90 aa)) form the OCT domain. Residues 457–513 (GSDLRLEDHSRPTRDEKRLQERERRAAKVTARDELEAERRAGHWTAADEADEELSQR) are disordered. The span at 458 to 497 (SDLRLEDHSRPTRDEKRLQERERRAAKVTARDELEAERRA) shows a compositional bias: basic and acidic residues. The span at 504 to 513 (DEADEELSQR) shows a compositional bias: acidic residues.

Belongs to the TRAFAC class OBG-HflX-like GTPase superfamily. OBG GTPase family. Monomer. Mg(2+) serves as cofactor.

Its subcellular location is the cytoplasm. Its function is as follows. An essential GTPase which binds GTP, GDP and possibly (p)ppGpp with moderate affinity, with high nucleotide exchange rates and a fairly low GTP hydrolysis rate. Plays a role in control of the cell cycle, stress response, ribosome biogenesis and in those bacteria that undergo differentiation, in morphogenesis control. The sequence is that of GTPase Obg from Kineococcus radiotolerans (strain ATCC BAA-149 / DSM 14245 / SRS30216).